The chain runs to 337 residues: Alcohol dehydrogenase (337 aa).

Positions 38, 61, 92, 95, 98, 106, and 148 each coordinate Zn(2+). NAD(+)-binding positions include 172 to 177 (GIGGLG), Asp-195, Lys-200, 260 to 262 (VGL), and Arg-331.

The protein belongs to the zinc-containing alcohol dehydrogenase family. Zn(2+) serves as cofactor.

The catalysed reaction is a primary alcohol + NAD(+) = an aldehyde + NADH + H(+). It catalyses the reaction a secondary alcohol + NAD(+) = a ketone + NADH + H(+). Substrate inhibition is not observed with any alcohols, and the enzyme-NADH dissociation is not considered to be a rate-limiting step. NAD(+)-dependent alcohol dehydrogenase. The protein is Alcohol dehydrogenase (adhT) of Geobacillus stearothermophilus (Bacillus stearothermophilus).